The primary structure comprises 357 residues: Arginine kinase (357 aa).

One can recognise a Phosphagen kinase N-terminal domain in the interval 9-91 (KLEAGFKKLQ…FNPIIEDYHE (83 aa)). 64-66 (GVG) contributes to the L-arginine binding site. In terms of domain architecture, Phosphagen kinase C-terminal spans 119 to 356 (YVVSTHVRCG…LEMIKMEEAA (238 aa)). ATP-binding positions include 122-126 (STHVR) and histidine 185. An L-arginine-binding site is contributed by glutamate 225. Arginine 229 contributes to the ATP binding site. An L-arginine-binding site is contributed by cysteine 271. Residues 280–284 (RASVH) and 309–314 (RGTRGE) each bind ATP.

Belongs to the ATP:guanido phosphotransferase family.

The catalysed reaction is L-arginine + ATP = N(omega)-phospho-L-arginine + ADP + H(+). In terms of biological role, catalyzes the reversible transfer of high energy ATP gamma-phosphate group to L-arginine. The chain is Arginine kinase from Polybetes pythagoricus (South American huntsman spider).